We begin with the raw amino-acid sequence, 331 residues long: Ketol-acid reductoisomerase (NADP(+)) (331 aa).

Residues 2–182 enclose the KARI N-terminal Rossmann domain; that stretch reads AQLFYDSDAD…GGTRAGILET (181 aa). NADP(+)-binding positions include 25–28, serine 51, serine 53, and 83–86; these read YGSQ and DEFQ. Histidine 108 is an active-site residue. Residue glycine 134 participates in NADP(+) binding. The 146-residue stretch at 183 to 328 folds into the KARI C-terminal knotted domain; that stretch reads NFKEETETDL…KGLRSMFSWL (146 aa). Mg(2+) is bound by residues aspartate 191, glutamate 195, glutamate 227, and glutamate 231. Serine 252 serves as a coordination point for substrate.

This sequence belongs to the ketol-acid reductoisomerase family. The cofactor is Mg(2+).

It carries out the reaction (2R)-2,3-dihydroxy-3-methylbutanoate + NADP(+) = (2S)-2-acetolactate + NADPH + H(+). It catalyses the reaction (2R,3R)-2,3-dihydroxy-3-methylpentanoate + NADP(+) = (S)-2-ethyl-2-hydroxy-3-oxobutanoate + NADPH + H(+). Its pathway is amino-acid biosynthesis; L-isoleucine biosynthesis; L-isoleucine from 2-oxobutanoate: step 2/4. It functions in the pathway amino-acid biosynthesis; L-valine biosynthesis; L-valine from pyruvate: step 2/4. Functionally, involved in the biosynthesis of branched-chain amino acids (BCAA). Catalyzes an alkyl-migration followed by a ketol-acid reduction of (S)-2-acetolactate (S2AL) to yield (R)-2,3-dihydroxy-isovalerate. In the isomerase reaction, S2AL is rearranged via a Mg-dependent methyl migration to produce 3-hydroxy-3-methyl-2-ketobutyrate (HMKB). In the reductase reaction, this 2-ketoacid undergoes a metal-dependent reduction by NADPH to yield (R)-2,3-dihydroxy-isovalerate. The sequence is that of Ketol-acid reductoisomerase (NADP(+)) from Synechococcus sp. (strain CC9311).